A 275-amino-acid polypeptide reads, in one-letter code: NH(3)-dependent NAD(+) synthetase (275 aa).

An ATP-binding site is contributed by glycine 46–serine 53. Mg(2+) is bound at residue aspartate 52. Deamido-NAD(+) is bound at residue arginine 140. Position 160 (threonine 160) interacts with ATP. A Mg(2+)-binding site is contributed by glutamate 165. Positions 173 and 180 each coordinate deamido-NAD(+). Residues lysine 189 and threonine 211 each coordinate ATP. Histidine 260–lysine 261 contributes to the deamido-NAD(+) binding site.

This sequence belongs to the NAD synthetase family. In terms of assembly, homodimer.

It carries out the reaction deamido-NAD(+) + NH4(+) + ATP = AMP + diphosphate + NAD(+) + H(+). Its pathway is cofactor biosynthesis; NAD(+) biosynthesis; NAD(+) from deamido-NAD(+) (ammonia route): step 1/1. Catalyzes the ATP-dependent amidation of deamido-NAD to form NAD. Uses ammonia as a nitrogen source. The sequence is that of NH(3)-dependent NAD(+) synthetase from Escherichia coli O17:K52:H18 (strain UMN026 / ExPEC).